The chain runs to 387 residues: Phosphoglycerate kinase (387 aa).

Substrate contacts are provided by residues 21-23, Arg-36, 59-62, Arg-113, and Arg-146; these read DLN and HLGR. ATP contacts are provided by residues Lys-197, Glu-314, and 340–343; that span reads GGDT.

It belongs to the phosphoglycerate kinase family. Monomer.

The protein localises to the cytoplasm. The catalysed reaction is (2R)-3-phosphoglycerate + ATP = (2R)-3-phospho-glyceroyl phosphate + ADP. It functions in the pathway carbohydrate degradation; glycolysis; pyruvate from D-glyceraldehyde 3-phosphate: step 2/5. In Cronobacter sakazakii (strain ATCC BAA-894) (Enterobacter sakazakii), this protein is Phosphoglycerate kinase.